A 73-amino-acid chain; its full sequence is Translation initiation factor IF-1 (73 aa).

The region spanning 1 to 72 (MAKEDVIEVE…SRGRITYRYR (72 aa)) is the S1-like domain.

It belongs to the IF-1 family. In terms of assembly, component of the 30S ribosomal translation pre-initiation complex which assembles on the 30S ribosome in the order IF-2 and IF-3, IF-1 and N-formylmethionyl-tRNA(fMet); mRNA recruitment can occur at any time during PIC assembly.

It is found in the cytoplasm. One of the essential components for the initiation of protein synthesis. Stabilizes the binding of IF-2 and IF-3 on the 30S subunit to which N-formylmethionyl-tRNA(fMet) subsequently binds. Helps modulate mRNA selection, yielding the 30S pre-initiation complex (PIC). Upon addition of the 50S ribosomal subunit IF-1, IF-2 and IF-3 are released leaving the mature 70S translation initiation complex. The protein is Translation initiation factor IF-1 of Rubrobacter xylanophilus (strain DSM 9941 / JCM 11954 / NBRC 16129 / PRD-1).